A 166-amino-acid polypeptide reads, in one-letter code: NAD(P)H-quinone oxidoreductase subunit I, chloroplastic (166 aa).

4Fe-4S ferredoxin-type domains are found at residues 55-84 and 95-124; these read GRIHFEFDKCIACEVCVRVCPMDLPVVDWK and LNYSIDFGICIFCGNCVEYCPTNCLSMTEE. [4Fe-4S] cluster contacts are provided by C64, C67, C70, C74, C104, C107, C110, and C114.

This sequence belongs to the complex I 23 kDa subunit family. In terms of assembly, NDH is composed of at least 16 different subunits, 5 of which are encoded in the nucleus. [4Fe-4S] cluster serves as cofactor.

The protein localises to the plastid. It localises to the chloroplast thylakoid membrane. The catalysed reaction is a plastoquinone + NADH + (n+1) H(+)(in) = a plastoquinol + NAD(+) + n H(+)(out). It carries out the reaction a plastoquinone + NADPH + (n+1) H(+)(in) = a plastoquinol + NADP(+) + n H(+)(out). In terms of biological role, NDH shuttles electrons from NAD(P)H:plastoquinone, via FMN and iron-sulfur (Fe-S) centers, to quinones in the photosynthetic chain and possibly in a chloroplast respiratory chain. The immediate electron acceptor for the enzyme in this species is believed to be plastoquinone. Couples the redox reaction to proton translocation, and thus conserves the redox energy in a proton gradient. In Steiractinia sodiroi, this protein is NAD(P)H-quinone oxidoreductase subunit I, chloroplastic.